The following is a 201-amino-acid chain: Small ribosomal subunit protein uS4 (201 aa).

An S4 RNA-binding domain is found at 92-155 (RRLDAVVYAL…QKLDIIQESV (64 aa)).

The protein belongs to the universal ribosomal protein uS4 family. In terms of assembly, part of the 30S ribosomal subunit. Contacts protein S5. The interaction surface between S4 and S5 is involved in control of translational fidelity.

Functionally, one of the primary rRNA binding proteins, it binds directly to 16S rRNA where it nucleates assembly of the body of the 30S subunit. In terms of biological role, with S5 and S12 plays an important role in translational accuracy. This Staphylococcus carnosus (strain TM300) protein is Small ribosomal subunit protein uS4.